The following is a 196-amino-acid chain: Probable malonic semialdehyde reductase RutE (196 aa).

This sequence belongs to the nitroreductase family. HadB/RutE subfamily. It depends on FMN as a cofactor.

The enzyme catalyses 3-hydroxypropanoate + NADP(+) = 3-oxopropanoate + NADPH + H(+). Its function is as follows. May reduce toxic product malonic semialdehyde to 3-hydroxypropionic acid, which is excreted. The polypeptide is Probable malonic semialdehyde reductase RutE (Klebsiella pneumoniae (strain 342)).